The primary structure comprises 650 residues: Zinc finger CCCH domain-containing protein 55 (650 aa).

The tract at residues asparagine 67–glycine 162 is disordered. Residues serine 105–asparagine 128 are compositionally biased toward low complexity. Over residues proline 141 to histidine 154 the composition is skewed to polar residues. The C3H1-type zinc-finger motif lies at proline 232–tyrosine 254. An RRM domain is found at arginine 357–lysine 433. Residues proline 566–glutamine 650 are disordered. Residues alanine 581 to leucine 590 are compositionally biased toward basic and acidic residues.

This chain is Zinc finger CCCH domain-containing protein 55, found in Arabidopsis thaliana (Mouse-ear cress).